Here is a 362-residue protein sequence, read N- to C-terminus: tRNA-specific 2-thiouridylase MnmA (362 aa).

ATP-binding positions include 8–15 (AMSGGVDS) and Met-35. The interval 95-97 (NPD) is interaction with target base in tRNA. The Nucleophile role is filled by Cys-100. Cysteines 100 and 196 form a disulfide. Gly-124 contributes to the ATP binding site. The segment at 146–148 (KDQ) is interaction with tRNA. Cys-196 (cysteine persulfide intermediate) is an active-site residue. The segment at 303–304 (RY) is interaction with tRNA.

The protein belongs to the MnmA/TRMU family.

Its subcellular location is the cytoplasm. The enzyme catalyses S-sulfanyl-L-cysteinyl-[protein] + uridine(34) in tRNA + AH2 + ATP = 2-thiouridine(34) in tRNA + L-cysteinyl-[protein] + A + AMP + diphosphate + H(+). In terms of biological role, catalyzes the 2-thiolation of uridine at the wobble position (U34) of tRNA, leading to the formation of s(2)U34. The polypeptide is tRNA-specific 2-thiouridylase MnmA (Chlamydia abortus (strain DSM 27085 / S26/3) (Chlamydophila abortus)).